The chain runs to 368 residues: Mitogen-activated protein kinase HOG1B (368 aa).

Residues 20-299 (YVNLEPVGMG…ASQALAHPYL (280 aa)) form the Protein kinase domain. ATP-binding positions include 26–34 (VGMGAFGLV) and Lys-49. The active-site Proton acceptor is Asp-141. Thr-171 is modified (phosphothreonine). A TXY motif is present at residues 171 to 173 (TGY). Tyr-173 carries the phosphotyrosine modification.

The protein belongs to the protein kinase superfamily. Ser/Thr protein kinase family. MAP kinase subfamily. HOG1 sub-subfamily. Mg(2+) serves as cofactor. In terms of processing, phosphorylated. Dually phosphorylated on Thr-171 and Tyr-173, which activates the enzyme. Rapidly dephosphorylated upon either hypo- or hyperosmotic shock.

The protein resides in the cytoplasm. It localises to the nucleus. The catalysed reaction is L-seryl-[protein] + ATP = O-phospho-L-seryl-[protein] + ADP + H(+). It carries out the reaction L-threonyl-[protein] + ATP = O-phospho-L-threonyl-[protein] + ADP + H(+). Activated by tyrosine and threonine phosphorylation. Functionally, mitogen-activated protein kinase involved in a signal transduction pathway that is activated by changes in the osmolarity of the extracellular environment. Controls osmotic regulation of transcription of target genes. This Wallemia ichthyophaga (strain EXF-994 / CBS 113033) protein is Mitogen-activated protein kinase HOG1B (HOG1B).